The chain runs to 269 residues: Dynein regulatory complex protein 8 (269 aa).

The disordered stretch occupies residues 1-113; it reads MLGPGQVRLR…RTGKGLGYNS (113 aa). Residues 54-76 are compositionally biased toward low complexity; that stretch reads AQGSSSPGIQSGPSSRPGSPRGA. EF-hand domains follow at residues 150–185 and 228–263; these read EFHK…LGCC and IPED…EDGV.

Belongs to the DRC8 family. As to quaternary structure, component of the nexin-dynein regulatory complex (N-DRC).

It is found in the cytoplasm. The protein resides in the cytoskeleton. Its subcellular location is the flagellum axoneme. Functionally, component of the nexin-dynein regulatory complex (N-DRC), a key regulator of ciliary/flagellar motility which maintains the alignment and integrity of the distal axoneme and regulates microtubule sliding in motile axonemes. In Homo sapiens (Human), this protein is Dynein regulatory complex protein 8 (EFCAB2).